Reading from the N-terminus, the 694-residue chain is Follicle-stimulating hormone receptor (694 aa).

A signal peptide spans 1 to 17 (MALLLVSLLAFLGSGAG). 2 cysteine pairs are disulfide-bonded: cysteine 18–cysteine 25 and cysteine 23–cysteine 32. The LRRNT domain occupies 18–46 (CHHWLCHCSDRVFLCQDSKVTEIPPDLPR). Residues 18 to 365 (CHHWLCHCSD…EDIMGYNILR (348 aa)) are Extracellular-facing. 9 LRR repeats span residues 49–72 (IELR…FKDL), 73–97 (EKIE…LPKL), 98–118 (HEIR…AFQN), 119–143 (LPNL…KIQS), 144–169 (LQKV…MGLS), 170–192 (FDSL…AFNG), 193–216 (TQLD…VFRG), 217–240 (ASGP…GLEN), and 241–259 (LKKL…PSLD). Asparagine 191 and asparagine 199 each carry an N-linked (GlcNAc...) asparagine glycan. Intrachain disulfides connect cysteine 275–cysteine 345, cysteine 276–cysteine 292, cysteine 276–cysteine 355, and cysteine 292–cysteine 337. Residues asparagine 293 and asparagine 311 are each glycosylated (N-linked (GlcNAc...) asparagine). A helical membrane pass occupies residues 366–386 (VLIWFISILAITGNITVLVIL). Over 387 to 397 (TTSQYKLTVPR) the chain is Cytoplasmic. Residues 398–420 (FLMCNLAFADLCIGIYLLPIASV) traverse the membrane as a helical segment. Residues 421–442 (DIHTKSQYHNYAIDWQTAVGCD) are Extracellular-facing. A disulfide bond links cysteine 441 and cysteine 516. Residues 443–464 (AAGFFTAFASELSVYTLTAIPL) form a helical membrane-spanning segment. Topologically, residues 465–484 (ERWHTITHAMQLERKVQLRH) are cytoplasmic. The helical transmembrane segment at 485–507 (AASVMVMGWVFAFAAALLPIFGV) threads the bilayer. The Extracellular segment spans residues 508–527 (SSYMKVSICLPIDIDSPLSQ). A helical membrane pass occupies residues 528–549 (LYVMALLVLNVLAFVVICGCYT). The Cytoplasmic portion of the chain corresponds to 550–572 (HIYLTVRNPNIVSSSSDTKIAKR). A helical membrane pass occupies residues 573–596 (MATLIFTDFLCMAPISLFAISASL). Topologically, residues 597-607 (KAPLITVSKAK) are extracellular. The helical transmembrane segment at 608 to 629 (ILLVLFYPINSCANPFLYAIFT) threads the bilayer. Over 630–694 (KNFRRDFFIL…LVPLSQSAHN (65 aa)) the chain is Cytoplasmic.

This sequence belongs to the G-protein coupled receptor 1 family. FSH/LSH/TSH subfamily. In terms of assembly, homotrimer. Functions as a homotrimer binding the FSH hormone heterodimer composed of CGA and FSHB. Interacts with ARRB2. Interacts with APPL2; interaction is independent of follicle stimulating hormone stimulation. N-glycosylated; indirectly required for FSH-binding, possibly via a conformational change that allows high affinity binding of hormone.

It is found in the cell membrane. Functionally, g protein-coupled receptor for follitropin, the follicle-stimulating hormone. Through cAMP production activates the downstream PI3K-AKT and ERK1/ERK2 signaling pathways. The chain is Follicle-stimulating hormone receptor (FSHR) from Mesocricetus auratus (Golden hamster).